We begin with the raw amino-acid sequence, 1436 residues long: Nuclear pore complex protein Nup160 (1436 aa).

Phosphoserine occurs at positions 44, 490, 949, and 1157.

Part of the nuclear pore complex (NPC). Forms part of the NUP160 subcomplex in the nuclear pore which is composed of NUP160, NUP133, NUP107 and NUP96. This complex plays a role in RNA export and in tethering NUP98 and NUP153 to the nucleus.

The protein resides in the nucleus. Its subcellular location is the nuclear pore complex. Its function is as follows. Functions as a component of the nuclear pore complex (NPC). Involved in poly(A)+ RNA transport. The polypeptide is Nuclear pore complex protein Nup160 (NUP160) (Homo sapiens (Human)).